Here is a 468-residue protein sequence, read N- to C-terminus: Glutamate--tRNA ligase (468 aa).

The 'HIGH' region motif lies at 10-20 (PSPTGYLHIGG). The short motif at 252–256 (KLSKR) is the 'KMSKS' region element. K255 provides a ligand contact to ATP.

Belongs to the class-I aminoacyl-tRNA synthetase family. Glutamate--tRNA ligase type 1 subfamily. Monomer.

The protein localises to the cytoplasm. It catalyses the reaction tRNA(Glu) + L-glutamate + ATP = L-glutamyl-tRNA(Glu) + AMP + diphosphate. Its function is as follows. Catalyzes the attachment of glutamate to tRNA(Glu) in a two-step reaction: glutamate is first activated by ATP to form Glu-AMP and then transferred to the acceptor end of tRNA(Glu). The sequence is that of Glutamate--tRNA ligase from Mycoplasmopsis pulmonis (strain UAB CTIP) (Mycoplasma pulmonis).